The following is an 842-amino-acid chain: Leucine--tRNA ligase (842 aa).

The short motif at 44 to 55 (PYPSANGLHVGH) is the 'HIGH' region element. The short motif at 619 to 623 (KMSKS) is the 'KMSKS' region element. ATP is bound at residue K622.

It belongs to the class-I aminoacyl-tRNA synthetase family.

Its subcellular location is the cytoplasm. It catalyses the reaction tRNA(Leu) + L-leucine + ATP = L-leucyl-tRNA(Leu) + AMP + diphosphate. In Borrelia turicatae (strain 91E135), this protein is Leucine--tRNA ligase.